The following is a 493-amino-acid chain: Xaa-Pro dipeptidase (493 aa).

The residue at position 2 (Ala2) is an N-acetylalanine. A Phosphoserine modification is found at Ser167. His255 contacts a dipeptide. 3 residues coordinate Mn(2+): Asp276, Asp287, and His370. Position 287 (Asp287) interacts with a dipeptide. Residues His377 and Arg398 each contribute to the a dipeptide site. Positions 412 and 452 each coordinate Mn(2+).

The protein belongs to the peptidase M24B family. Eukaryotic-type prolidase subfamily. As to quaternary structure, homodimer. Mn(2+) is required as a cofactor.

The enzyme catalyses Xaa-L-Pro dipeptide + H2O = an L-alpha-amino acid + L-proline. Its function is as follows. Dipeptidase that catalyzes the hydrolysis of dipeptides with a prolyl (Xaa-Pro) or hydroxyprolyl residue in the C-terminal position. The preferred dipeptide substrate is Gly-Pro, but other Xaa-Pro dipeptides, such as Ala-Pro, Met-Pro, Phe-Pro, Val-Pro and Leu-Pro, can be cleaved. Plays an important role in collagen metabolism because the high level of iminoacids in collagen. The polypeptide is Xaa-Pro dipeptidase (Pepd) (Mus musculus (Mouse)).